We begin with the raw amino-acid sequence, 186 residues long: Tumor necrosis factor alpha-induced protein 8-like protein 1 (186 aa).

Belongs to the TNFAIP8 family.

It is found in the cytoplasm. This is Tumor necrosis factor alpha-induced protein 8-like protein 1 (TNFAIP8L1) from Gallus gallus (Chicken).